The following is a 105-amino-acid chain: Ferredoxin-2 (105 aa).

The region spanning 4–94 is the 2Fe-2S ferredoxin-type domain; it reads YQVEVIYQGQ…DLKIETHKED (91 aa). [2Fe-2S] cluster-binding residues include cysteine 40, cysteine 45, cysteine 48, and cysteine 78.

The protein belongs to the 2Fe2S plant-type ferredoxin family. Forms a complex with heterodimeric ferredoxin-thioredoxin reductase (FTR) and thioredoxin. [2Fe-2S] cluster serves as cofactor.

Functionally, ferredoxins are iron-sulfur proteins that transfer electrons in a wide variety of metabolic reactions. The protein is Ferredoxin-2 (petF2) of Synechococcus sp. (strain ATCC 27144 / PCC 6301 / SAUG 1402/1) (Anacystis nidulans).